A 142-amino-acid polypeptide reads, in one-letter code: Semaphorin-like protein VACWR164 (142 aa).

Positions 1 to 142 (MNTIKQSFST…MPQMKKILKM (142 aa)) constitute a Sema domain.

Belongs to the semaphorin family.

The polypeptide is Semaphorin-like protein VACWR164 (Bos taurus (Bovine)).